A 61-amino-acid polypeptide reads, in one-letter code: Small ribosomal subunit protein uS14 (61 aa).

Positions 24, 27, 40, and 43 each coordinate Zn(2+).

This sequence belongs to the universal ribosomal protein uS14 family. Zinc-binding uS14 subfamily. In terms of assembly, part of the 30S ribosomal subunit. Contacts proteins S3 and S10. The cofactor is Zn(2+).

Binds 16S rRNA, required for the assembly of 30S particles and may also be responsible for determining the conformation of the 16S rRNA at the A site. The polypeptide is Small ribosomal subunit protein uS14 (Mesoplasma florum (strain ATCC 33453 / NBRC 100688 / NCTC 11704 / L1) (Acholeplasma florum)).